A 138-amino-acid polypeptide reads, in one-letter code: Acidic phospholipase A2 pgPLA 1b/pgPLA 2b (138 aa).

The signal sequence occupies residues Met1 to Gly16. Disulfide bonds link Cys42–Cys131, Cys44–Cys60, Cys59–Cys111, Cys65–Cys138, Cys66–Cys104, Cys73–Cys97, and Cys91–Cys102. Ca(2+)-binding residues include Tyr43, Gly45, and Gly47. The active site involves His63. Asp64 lines the Ca(2+) pocket. Residue Asp105 is part of the active site.

The protein belongs to the phospholipase A2 family. Group II subfamily. D49 sub-subfamily. Ca(2+) serves as cofactor. In terms of tissue distribution, expressed by the venom gland.

The protein resides in the secreted. It carries out the reaction a 1,2-diacyl-sn-glycero-3-phosphocholine + H2O = a 1-acyl-sn-glycero-3-phosphocholine + a fatty acid + H(+). PLA2 catalyzes the calcium-dependent hydrolysis of the 2-acyl groups in 3-sn-phosphoglycerides. This chain is Acidic phospholipase A2 pgPLA 1b/pgPLA 2b, found in Protobothrops flavoviridis (Habu).